A 563-amino-acid chain; its full sequence is Forkhead box protein O (563 aa).

Disordered regions lie at residues 1-72 (MDDF…DPQQ) and 177-243 (KSVR…SYQL). A Phosphothreonine; by PKB/AKT1 modification is found at Thr43. The span at 58-72 (TKASNQQLANGDPQQ) shows a compositional bias: polar residues. Residues 90–196 (WGNLSYADLI…ETSRYEKRRG (107 aa)) constitute a DNA-binding region (fork-head). The residue at position 185 (Ser185) is a Phosphoserine; by PKB/AKT1. The span at 216–225 (ATPSPSSSVS) shows a compositional bias: polar residues. At Ser253 the chain carries Phosphoserine; by PKB/AKT1. Ser256, Ser257, and Ser262 each carry phosphoserine. Residues 317 to 371 (AASGLPTQPPPPYQPPQHPQHTQGYALNGPGLSPNSVTTTMSPAYPNSEPSSDSL) are disordered. Residues 323–334 (TQPPPPYQPPQH) are compositionally biased toward pro residues. Residues 349–358 (SPNSVTTTMS) are compositionally biased toward polar residues.

As to quaternary structure, interacts with melt.

It localises to the cytoplasm. The protein localises to the nucleus. Transcription factor involved in the regulation of the insulin signaling pathway. Consistently activates both the downstream target Thor\d4EBP and the feedback control target InR. Involved in negative regulation of the cell cycle, modulating cell growth and proliferation. In response to cellular stresses, such as nutrient deprivation or increased levels of reactive oxygen species, foxo is activated and inhibits growth through the action of target genes such as Thor. Foxo activated in the adult fat body can regulate lifespan in adults; an insulin peptide itself may function as one secondary messenger of insulin-regulated aging. Also regulates Lip4, homolog of human acid lipases, thereby acting as a key modulator of lipid metabolism by insulin signaling and integrates insulin responses to glucose and lipid homeostasis. The sequence is that of Forkhead box protein O from Drosophila mojavensis (Fruit fly).